The chain runs to 1488 residues: Chromosome partition protein MukB (1488 aa).

Gly34–Ser41 contributes to the ATP binding site. Coiled-coil stretches lie at residues Leu326–Gln418, Leu444–His472, and Arg509–Pro602. Positions Pro666–Arg783 are flexible hinge. Coiled-coil stretches lie at residues Glu835–Glu923, Glu977–Gly1116, and Val1209–Val1265. Residues Ala1049–Arg1074 are disordered. Over residues Ser1051–His1065 the composition is skewed to basic and acidic residues.

It belongs to the SMC family. MukB subfamily. Homodimerization via its hinge domain. Binds to DNA via its C-terminal region. Interacts, and probably forms a ternary complex, with MukE and MukF via its C-terminal region. The complex formation is stimulated by calcium or magnesium. Interacts with tubulin-related protein FtsZ.

Its subcellular location is the cytoplasm. It is found in the nucleoid. Its function is as follows. Plays a central role in chromosome condensation, segregation and cell cycle progression. Functions as a homodimer, which is essential for chromosome partition. Involved in negative DNA supercoiling in vivo, and by this means organize and compact chromosomes. May achieve or facilitate chromosome segregation by condensation DNA from both sides of a centrally located replisome during cell division. This chain is Chromosome partition protein MukB, found in Salmonella paratyphi A (strain ATCC 9150 / SARB42).